The following is a 185-amino-acid chain: MQSLKHHFLLAMPHLDDPNFKGTLTYLCDHDENGTMGVIVNRPMELTLDALLEQLELDAAECPCREMPVHYGGPVHKDRGFILHRGSSLPWDSSLQVADDIALTTSMDMLKAIANGQGPEDFIVCLGCAAWQAGQLEDELKQNTWLTVEGDASILFEVHAEQRLSAAAGILGIDLNLMSREAGHS.

Belongs to the UPF0301 (AlgH) family.

In Chromohalobacter salexigens (strain ATCC BAA-138 / DSM 3043 / CIP 106854 / NCIMB 13768 / 1H11), this protein is UPF0301 protein Csal_0058.